We begin with the raw amino-acid sequence, 390 residues long: Branched-chain-amino-acid aminotransferase (390 aa).

Position 225 is an N6-(pyridoxal phosphate)lysine (K225).

This sequence belongs to the class-IV pyridoxal-phosphate-dependent aminotransferase family. In terms of assembly, homodimer. The cofactor is pyridoxal 5'-phosphate.

It catalyses the reaction L-leucine + 2-oxoglutarate = 4-methyl-2-oxopentanoate + L-glutamate. It carries out the reaction L-isoleucine + 2-oxoglutarate = (S)-3-methyl-2-oxopentanoate + L-glutamate. The enzyme catalyses L-valine + 2-oxoglutarate = 3-methyl-2-oxobutanoate + L-glutamate. Functionally, catalyzes the first reaction in the catabolism of the essential branched chain amino acids leucine, isoleucine, and valine. The protein is Branched-chain-amino-acid aminotransferase of Monosiga brevicollis (Choanoflagellate).